A 353-amino-acid chain; its full sequence is tRNA-splicing endonuclease (353 aa).

Active-site residues include tyrosine 289, histidine 300, and lysine 331.

This sequence belongs to the tRNA-intron endonuclease family. Archaeal long subfamily. In terms of assembly, homodimer.

It carries out the reaction pretRNA = a 3'-half-tRNA molecule with a 5'-OH end + a 5'-half-tRNA molecule with a 2',3'-cyclic phosphate end + an intron with a 2',3'-cyclic phosphate and a 5'-hydroxyl terminus.. Endonuclease that removes tRNA introns. Cleaves pre-tRNA at the 5'- and 3'-splice sites to release the intron. The products are an intron and two tRNA half-molecules bearing 2',3' cyclic phosphate and 5'-OH termini. Recognizes a pseudosymmetric substrate in which 2 bulged loops of 3 bases are separated by a stem of 4 bp. The polypeptide is tRNA-splicing endonuclease (Methanosarcina mazei (strain ATCC BAA-159 / DSM 3647 / Goe1 / Go1 / JCM 11833 / OCM 88) (Methanosarcina frisia)).